A 733-amino-acid chain; its full sequence is Photosystem I P700 chlorophyll a apoprotein A2 (733 aa).

A run of 8 helical transmembrane segments spans residues 46–69, 134–157, 174–198, 272–290, 329–352, 368–394, 416–438, and 516–534; these read IFAS…FHVA, LYLG…LHLQ, LNHH…HVAL, IAHH…GHMY, LHIQ…QHMY, AALY…IFFV, AIIS…LYIH, and FLVH…LILV. Cysteine 558 and cysteine 567 together coordinate [4Fe-4S] cluster. 2 helical membrane passes run 574–595 and 642–664; these read AFYL…YWHW and LSVW…MFLI. Chlorophyll a contacts are provided by histidine 653, methionine 661, and tyrosine 669. Residue tryptophan 670 participates in phylloquinone binding. A helical membrane pass occupies residues 706–726; sequence LVGLVHFAVGYILTYAAFVIA.

The protein belongs to the PsaA/PsaB family. In terms of assembly, the PsaA/B heterodimer binds the P700 chlorophyll special pair and subsequent electron acceptors. PSI consists of a core antenna complex that captures photons, and an electron transfer chain that converts photonic excitation into a charge separation. The eukaryotic PSI reaction center is composed of at least 11 subunits. It depends on P700 is a chlorophyll a/chlorophyll a' dimer, A0 is one or more chlorophyll a, A1 is one or both phylloquinones and FX is a shared 4Fe-4S iron-sulfur center. as a cofactor.

The protein resides in the plastid. It localises to the chloroplast thylakoid membrane. The enzyme catalyses reduced [plastocyanin] + hnu + oxidized [2Fe-2S]-[ferredoxin] = oxidized [plastocyanin] + reduced [2Fe-2S]-[ferredoxin]. In terms of biological role, psaA and PsaB bind P700, the primary electron donor of photosystem I (PSI), as well as the electron acceptors A0, A1 and FX. PSI is a plastocyanin/cytochrome c6-ferredoxin oxidoreductase, converting photonic excitation into a charge separation, which transfers an electron from the donor P700 chlorophyll pair to the spectroscopically characterized acceptors A0, A1, FX, FA and FB in turn. Oxidized P700 is reduced on the lumenal side of the thylakoid membrane by plastocyanin or cytochrome c6. The sequence is that of Photosystem I P700 chlorophyll a apoprotein A2 from Trieres chinensis (Marine centric diatom).